The chain runs to 332 residues: uncharacterized protein (332 aa).

The first 32 residues, 1–32, serve as a signal peptide directing secretion; it reads MSRDRGARGLRKYGRFALATGAATALSLTASG. Cys33 carries N-palmitoyl cysteine lipidation. Cys33 carries S-diacylglycerol cysteine lipidation.

Its subcellular location is the cell membrane. This is an uncharacterized protein from Streptomyces avermitilis (strain ATCC 31267 / DSM 46492 / JCM 5070 / NBRC 14893 / NCIMB 12804 / NRRL 8165 / MA-4680).